A 181-amino-acid chain; its full sequence is Ribosome maturation factor RimM (181 aa).

Positions glutamate 98–leucine 177 constitute a PRC barrel domain.

Belongs to the RimM family. Binds ribosomal protein uS19.

It localises to the cytoplasm. An accessory protein needed during the final step in the assembly of 30S ribosomal subunit, possibly for assembly of the head region. Essential for efficient processing of 16S rRNA. May be needed both before and after RbfA during the maturation of 16S rRNA. It has affinity for free ribosomal 30S subunits but not for 70S ribosomes. The chain is Ribosome maturation factor RimM from Helicobacter pylori (strain HPAG1).